The sequence spans 679 residues: Protein polyglycylase TTLL10 (679 aa).

Positions 1-15 are enriched in basic residues; the sequence is MPLHPPARRPHGHRR. 3 disordered regions span residues 1 to 33, 49 to 77, and 96 to 124; these read MPLH…GRLS, GHRA…LMPA, and VSFK…RMGS. Over residues 18-30 the composition is skewed to polar residues; that stretch reads SEAQTEATTQDTG. A compositionally biased stretch (basic residues) spans 96–110; sequence VSFKRPKRSRTHQSH. The 372-residue stretch at 172-543 folds into the TTL domain; sequence QGPFFYIGGT…TCQKSLHSQK (372 aa). Residues lysine 304, 310 to 311, 353 to 356, 366 to 368, and 409 to 410 contribute to the ATP site; these read QG, QRYV, KFD, and TN. An a protein-binding site is contributed by glutamine 310. Mg(2+)-binding residues include aspartate 489, glutamate 502, and asparagine 504. The tract at residues 605-679 is disordered; it reads DRPAARKSMS…EQRSTSHRGS (75 aa).

It depends on Mg(2+) as a cofactor.

The protein localises to the cytoplasm. It is found in the cytoskeleton. It localises to the cell projection. Its subcellular location is the cilium. The protein resides in the cilium axoneme. The enzyme catalyses (glycyl)(n)-glycyl-L-glutamyl-[protein] + glycine + ATP = (glycyl)(n+1)-glycyl-L-glutamyl-[protein] + ADP + phosphate + H(+). Functionally, polyglycylase which modifies both tubulin and non-tubulin proteins, generating polyglycine side chains of variable lengths on the gamma-carboxyl groups of specific glutamate residues of target proteins. Involved in the elongation step rather than the initiation step of the polyglycylation reaction. Polyglycylates alpha-tubulin and beta-tubulin. Polyglycylates non-tubulin proteins such as nucleosome assembly protein NAP1. The protein is Protein polyglycylase TTLL10 of Rattus norvegicus (Rat).